We begin with the raw amino-acid sequence, 177 residues long: ATP synthase subunit delta (177 aa).

Belongs to the ATPase delta chain family. F-type ATPases have 2 components, F(1) - the catalytic core - and F(0) - the membrane proton channel. F(1) has five subunits: alpha(3), beta(3), gamma(1), delta(1), epsilon(1). F(0) has three main subunits: a(1), b(2) and c(10-14). The alpha and beta chains form an alternating ring which encloses part of the gamma chain. F(1) is attached to F(0) by a central stalk formed by the gamma and epsilon chains, while a peripheral stalk is formed by the delta and b chains.

The protein localises to the cell inner membrane. Its function is as follows. F(1)F(0) ATP synthase produces ATP from ADP in the presence of a proton or sodium gradient. F-type ATPases consist of two structural domains, F(1) containing the extramembraneous catalytic core and F(0) containing the membrane proton channel, linked together by a central stalk and a peripheral stalk. During catalysis, ATP synthesis in the catalytic domain of F(1) is coupled via a rotary mechanism of the central stalk subunits to proton translocation. This protein is part of the stalk that links CF(0) to CF(1). It either transmits conformational changes from CF(0) to CF(1) or is implicated in proton conduction. The protein is ATP synthase subunit delta of Sodalis glossinidius (strain morsitans).